We begin with the raw amino-acid sequence, 2271 residues long: Serine-rich adhesin for platelets (2271 aa).

Residues methionine 1–phenylalanine 89 form the signal peptide. Residues alanine 90 to alanine 230 are serine-rich repeat region 1, SRR1. Residues leucine 100 to asparagine 111 are compositionally biased toward polar residues. Disordered stretches follow at residues leucine 100–threonine 229, asparagine 751–threonine 791, and serine 806–glycine 2243. Residues serine 112–threonine 128 show a composition bias toward low complexity. Residues lysine 129–aspartate 140 are compositionally biased toward polar residues. Residues valine 150 to threonine 229 show a composition bias toward low complexity. The interval proline 231–asparagine 751 is non-repeat region (NRR). Low complexity-rich tracts occupy residues serine 752–threonine 791, serine 806–serine 1392, and serine 1402–glutamate 2214. The segment at serine 752–threonine 2232 is serine-rich repeat region 2, SRR2. The LPXTG sorting signal motif lies at leucine 2229–glycine 2233. Threonine 2232 carries the pentaglycyl murein peptidoglycan amidated threonine modification. A propeptide spans glycine 2233–alanine 2271 (removed by sortase).

It belongs to the serine-rich repeat protein (SRRP) family. Post-translationally, proteolytically cleaved by a metalloprotease. In terms of processing, glycosylated. It is probable that most of the Ser residues in SSR1 and SSR2 are O-GlcNAcylated. Sequential glycosylation by sugar transferases are able to generate complex sugar polymorphisms.

It localises to the secreted. The protein localises to the cell wall. Functionally, mediates binding to human platelets, possibly through a receptor-ligand interaction. Probably associated with virulence in endovascular infection. The polypeptide is Serine-rich adhesin for platelets (sraP) (Staphylococcus aureus (strain Mu50 / ATCC 700699)).